A 151-amino-acid polypeptide reads, in one-letter code: MGTLILDSMVNKEAVLREAPPGTILVTVGDVTSERISGFGMTPLLQIIDGKTRRAAHEPAGPPPDVEIIRCENPAGGISPECIETIRRALGSSSPLRLVVSGEEDLLVIPACIYAPDGAVIMYGQPGRGLVAIHVDAGIRYKAKGLLDSVS.

Positions 30, 31, 49, 51, and 104 each coordinate GTP.

The protein belongs to the GTP-dependent DPCK family.

The enzyme catalyses 3'-dephospho-CoA + GTP = GDP + CoA + H(+). Its pathway is cofactor biosynthesis; coenzyme A biosynthesis. Catalyzes the GTP-dependent phosphorylation of the 3'-hydroxyl group of dephosphocoenzyme A to form coenzyme A (CoA). This chain is GTP-dependent dephospho-CoA kinase, found in Cenarchaeum symbiosum (strain A).